Consider the following 263-residue polypeptide: MSEHRVNHEPVFLLASSPWRESSLRVEAFSRRYGRVALLARSARKRQSELRGVLVPFVPVSASWYGSQELKTLHRAEWIGGWPQPQGRALFSGLYVNELMLKLTVREDPLPELYDALAEVMEAVCCKAAYIDDLRRFEWRLLNLLGVAPDLHADGTGGDILADKTYRLMPEEAVMPVCEDADALSHEAGAIVEGQSLIDLREGSFRTAESLQQALKITRLFIRHLLPEGLKSRQVLEQIRQFDRKETARETVPTSDGTASNAV.

Positions 243–263 (DRKETARETVPTSDGTASNAV) are disordered. The segment covering 252–263 (VPTSDGTASNAV) has biased composition (polar residues).

It belongs to the RecO family.

Involved in DNA repair and RecF pathway recombination. The polypeptide is DNA repair protein RecO (Neisseria meningitidis serogroup C / serotype 2a (strain ATCC 700532 / DSM 15464 / FAM18)).